The chain runs to 295 residues: Trimeric intracellular cation channel type A (295 aa).

Residues 1–18 lie on the Lumenal side of the membrane; the sequence is MELLSALSLDDLAASFSK. A helical membrane pass occupies residues 19–39; sequence LPVFPLFDVAYYIISILYLKY. The Cytoplasmic portion of the chain corresponds to 40–51; sequence EPGAVDLSKRSP. Residues 52-72 traverse the membrane as a helical segment; it reads VASWLCAMLYCFGSYILADVL. The Lumenal segment spans residues 73 to 84; that stretch reads LGESPIHYFSNN. A Ca(2+)-binding site is contributed by G74. The chain crosses the membrane as a helical span at residues 85 to 105; sequence ANILLASAVWYLTFFCPLNIF. The Cytoplasmic portion of the chain corresponds to 106 to 144; it reads YKIVSFLPVKLVLVGMKEVVRVRKIAMGIHHAHHHYHHG. Residues K122 and R126 each coordinate a 1,2-diacyl-sn-glycero-3-phospho-(1D-myo-inositol-4,5-bisphosphate). The helical transmembrane segment at 145 to 165 threads the bilayer; sequence WVIMVLIGWVKGSGVALMSNL. The Lumenal portion of the chain corresponds to 166–178; that stretch reads EQLLRGVWKPETN. The chain crosses the membrane as a helical span at residues 179-199; the sequence is EILHMSFPTKASLYGAILFTL. The Cytoplasmic portion of the chain corresponds to 200–201; sequence QQ. A helical transmembrane segment spans residues 202-222; it reads AHWLPISKAYLIFFFTLFMAV. The Lumenal portion of the chain corresponds to 223–233; the sequence is CKIYMTATHSH. Residues 234–254 form a helical membrane-spanning segment; sequence GSPFAIFESGICYVLFAAANG. The Cytoplasmic segment spans residues 255 to 295; that stretch reads DHDDHGNHHHHHDDHDVSHSAGKSKEEHNEGTRKRKTKKAE. The disordered stretch occupies residues 258-295; that stretch reads DHGNHHHHHDDHDVSHSAGKSKEEHNEGTRKRKTKKAE. Positions 267 to 286 are enriched in basic and acidic residues; that stretch reads DDHDVSHSAGKSKEEHNEGT.

This sequence belongs to the TMEM38 family. In terms of assembly, homotrimer; conformation seems to be controled by binding to diacylglycerol (DAG).

Its subcellular location is the sarcoplasmic reticulum membrane. The protein localises to the nucleus membrane. The catalysed reaction is K(+)(in) = K(+)(out). Its activity is regulated as follows. Channel activity is activated by a change of voltage within the sarcoplasmic reticulum lumen and blocked by luminal high Ca(2+) levels. Functionally, intracellular monovalent cation channel required for maintenance of rapid intracellular calcium release. Acts as a potassium counter-ion channel that functions in synchronization with calcium release from intracellular stores. Opened by a change of voltage within the sarcoplasmic reticulum lumen. The polypeptide is Trimeric intracellular cation channel type A (tmem38a) (Xenopus laevis (African clawed frog)).